Here is a 149-residue protein sequence, read N- to C-terminus: Large ribosomal subunit protein bL9 (149 aa).

It belongs to the bacterial ribosomal protein bL9 family.

Its function is as follows. Binds to the 23S rRNA. The sequence is that of Large ribosomal subunit protein bL9 from Geobacillus kaustophilus (strain HTA426).